We begin with the raw amino-acid sequence, 433 residues long: Divergent protein kinase domain 2B (433 aa).

A signal peptide spans methionine 1 to serine 29. The N-linked (GlcNAc...) asparagine glycan is linked to asparagine 100.

Belongs to the DIPK family.

It is found in the secreted. The chain is Divergent protein kinase domain 2B (DIPK2B) from Bos taurus (Bovine).